Reading from the N-terminus, the 206-residue chain is Large ribosomal subunit protein uL4 (206 aa).

Residues 47–75 (GTQSAKTRAEVSGGGIKPWRQKGTGRARQ) are disordered.

It belongs to the universal ribosomal protein uL4 family. As to quaternary structure, part of the 50S ribosomal subunit.

One of the primary rRNA binding proteins, this protein initially binds near the 5'-end of the 23S rRNA. It is important during the early stages of 50S assembly. It makes multiple contacts with different domains of the 23S rRNA in the assembled 50S subunit and ribosome. In terms of biological role, forms part of the polypeptide exit tunnel. The chain is Large ribosomal subunit protein uL4 from Clostridium botulinum (strain ATCC 19397 / Type A).